A 99-amino-acid chain; its full sequence is Nucleoid-associated protein MGAS2096_Spy1605 (99 aa).

It belongs to the YbaB/EbfC family. As to quaternary structure, homodimer.

It localises to the cytoplasm. It is found in the nucleoid. Functionally, binds to DNA and alters its conformation. May be involved in regulation of gene expression, nucleoid organization and DNA protection. In Streptococcus pyogenes serotype M12 (strain MGAS2096), this protein is Nucleoid-associated protein MGAS2096_Spy1605.